The primary structure comprises 269 residues: Shikimate dehydrogenase (NADP(+)) (269 aa).

Shikimate is bound by residues 14 to 16 (SKS) and Thr61. Lys65 serves as the catalytic Proton acceptor. Glu77 serves as a coordination point for NADP(+). Residues Asn86 and Asp102 each contribute to the shikimate site. NADP(+)-binding positions include 126–130 (GAGGA), 149–154 (NRTLTK), and Met213. A shikimate-binding site is contributed by Tyr215. Residue Gly238 participates in NADP(+) binding.

Belongs to the shikimate dehydrogenase family. As to quaternary structure, homodimer.

The enzyme catalyses shikimate + NADP(+) = 3-dehydroshikimate + NADPH + H(+). The protein operates within metabolic intermediate biosynthesis; chorismate biosynthesis; chorismate from D-erythrose 4-phosphate and phosphoenolpyruvate: step 4/7. Its function is as follows. Involved in the biosynthesis of the chorismate, which leads to the biosynthesis of aromatic amino acids. Catalyzes the reversible NADPH linked reduction of 3-dehydroshikimate (DHSA) to yield shikimate (SA). In Actinobacillus succinogenes (strain ATCC 55618 / DSM 22257 / CCUG 43843 / 130Z), this protein is Shikimate dehydrogenase (NADP(+)).